Here is a 123-residue protein sequence, read N- to C-terminus: Ribosome-binding factor A (123 aa).

Belongs to the RbfA family. In terms of assembly, monomer. Binds 30S ribosomal subunits, but not 50S ribosomal subunits or 70S ribosomes.

The protein localises to the cytoplasm. In terms of biological role, one of several proteins that assist in the late maturation steps of the functional core of the 30S ribosomal subunit. Associates with free 30S ribosomal subunits (but not with 30S subunits that are part of 70S ribosomes or polysomes). Required for efficient processing of 16S rRNA. May interact with the 5'-terminal helix region of 16S rRNA. The sequence is that of Ribosome-binding factor A from Desulfatibacillum aliphaticivorans.